Reading from the N-terminus, the 423-residue chain is COP9 signalosome complex subunit 3 (423 aa).

Positions 197 to 365 (NFERALYFFE…GMVCFHDNPE (169 aa)) constitute a PCI domain. The interval 402–423 (QFVQKSMGTQEDDVGSKTSSYS) is disordered.

It belongs to the CSN3 family. Component of the CSN complex, probably composed of cops1, cops2, cops3, cops4, cops5, cops6, cops7, cops8 and cops9.

The protein localises to the cytoplasm. It is found in the nucleus. In terms of biological role, component of the COP9 signalosome complex (CSN), a complex involved in various cellular and developmental processes. The CSN complex is an essential regulator of the ubiquitin (Ubl) conjugation pathway by mediating the deneddylation of the cullin subunits of E3 ligase complexes, leading to modify the Ubl ligase activity. The sequence is that of COP9 signalosome complex subunit 3 (cops3) from Danio rerio (Zebrafish).